A 417-amino-acid polypeptide reads, in one-letter code: 2-oxoglutarate and iron-dependent oxygenase JMJD4 (417 aa).

A JmjC domain is found at 142-301; that stretch reads CRDFPVEDVF…NMWRFLQQEL (160 aa). Residues H189, D191, and H269 each coordinate Fe cation.

The protein belongs to the JMJD6 family. As to quaternary structure, interacts with ETF1. Interacts with the ETF1-GSPT1 complex. Requires Fe(2+) as cofactor.

It localises to the cytoplasm. The catalysed reaction is L-lysyl-[protein] + 2-oxoglutarate + O2 = 4-hydroxy-L-lysyl-[protein] + succinate + CO2. In terms of biological role, catalyzes the 2-oxoglutarate and iron-dependent C4-lysyl hydroxylation of ETF1 at 'Lys-63' thereby promoting the translational termination efficiency of ETF1. This is 2-oxoglutarate and iron-dependent oxygenase JMJD4 (JMJD4) from Homo sapiens (Human).